The primary structure comprises 1274 residues: Clustered mitochondria protein homolog (1274 aa).

The interval 1 to 53 (MAQTNGELEHSKGMSSPAVRISQAQKSTKLTVDPESPEQVANGTHAEGEQPEE) is disordered. TPR repeat units follow at residues 293-326 (SPSF…PNNP), 510-543 (DYGG…KKHP), and 628-661 (AKEA…ERVD). A Clu domain is found at 342–586 (DITRSQENYL…RVTPLDVMWQ (245 aa)). 2 disordered regions span residues 631–655 (AAKK…EEAL) and 893–925 (VSNG…ARAA). TPR repeat units lie at residues 998–1031 (AKLY…TERT), 1040–1073 (ILSY…WKII), 1082–1115 (ITTM…CESL), and 1124–1157 (ATIL…FLQQ). A disordered region spans residues 1197-1274 (INMTPRTLGT…KLRGSKKSSA (78 aa)). Over residues 1200–1217 (TPRTLGTRVQPQVGQTAP) the composition is skewed to polar residues.

It belongs to the CLU family. May associate with the eukaryotic translation initiation factor 3 (eIF-3) complex.

It is found in the cytoplasm. Functionally, mRNA-binding protein involved in proper cytoplasmic distribution of mitochondria. The chain is Clustered mitochondria protein homolog from Aspergillus terreus (strain NIH 2624 / FGSC A1156).